The primary structure comprises 447 residues: Methionine aminopeptidase 2 (447 aa).

Residues 1 to 86 form a disordered region; sequence MAGATEGEDT…KNKKKKKKKI (86 aa). The segment covering 8 to 32 has biased composition (basic and acidic residues); the sequence is EDTKVIESKINELNIDKPKLEDNNE. Residues 43 to 60 show a composition bias toward acidic residues; that stretch reads GGDDDDDKEDDDDNDEIT. Over residues 71-86 the composition is skewed to basic residues; sequence KKKKKNKNKKKKKKKI. His198 is a substrate binding site. The a divalent metal cation site is built by Asp218, Asp229, and His300. A substrate-binding site is contributed by His308. A divalent metal cation contacts are provided by Glu333 and Glu428.

This sequence belongs to the peptidase M24A family. Methionine aminopeptidase eukaryotic type 2 subfamily. It depends on Co(2+) as a cofactor. Zn(2+) serves as cofactor. Mn(2+) is required as a cofactor. Requires Fe(2+) as cofactor.

The protein resides in the cytoplasm. It carries out the reaction Release of N-terminal amino acids, preferentially methionine, from peptides and arylamides.. Functionally, cotranslationally removes the N-terminal methionine from nascent proteins. The N-terminal methionine is often cleaved when the second residue in the primary sequence is small and uncharged (Met-Ala-, Cys, Gly, Pro, Ser, Thr, or Val). In Candida albicans (strain WO-1) (Yeast), this protein is Methionine aminopeptidase 2.